We begin with the raw amino-acid sequence, 440 residues long: ATP-dependent protease ATPase subunit HslU (440 aa).

Residues valine 18, 60–65 (GVGKTE), aspartate 254, glutamate 319, and arginine 391 contribute to the ATP site.

This sequence belongs to the ClpX chaperone family. HslU subfamily. A double ring-shaped homohexamer of HslV is capped on each side by a ring-shaped HslU homohexamer. The assembly of the HslU/HslV complex is dependent on binding of ATP.

The protein resides in the cytoplasm. Functionally, ATPase subunit of a proteasome-like degradation complex; this subunit has chaperone activity. The binding of ATP and its subsequent hydrolysis by HslU are essential for unfolding of protein substrates subsequently hydrolyzed by HslV. HslU recognizes the N-terminal part of its protein substrates and unfolds these before they are guided to HslV for hydrolysis. This chain is ATP-dependent protease ATPase subunit HslU, found in Cellvibrio japonicus (strain Ueda107) (Pseudomonas fluorescens subsp. cellulosa).